The chain runs to 367 residues: DNA replication and repair protein RecF (367 aa).

30–37 provides a ligand contact to ATP; sequence GANGSGKT.

Belongs to the RecF family.

It is found in the cytoplasm. The RecF protein is involved in DNA metabolism; it is required for DNA replication and normal SOS inducibility. RecF binds preferentially to single-stranded, linear DNA. It also seems to bind ATP. The sequence is that of DNA replication and repair protein RecF from Pseudomonas fluorescens (strain SBW25).